The sequence spans 432 residues: Glutamate-1-semialdehyde 2,1-aminomutase (432 aa).

Lysine 271 bears the N6-(pyridoxal phosphate)lysine mark.

This sequence belongs to the class-III pyridoxal-phosphate-dependent aminotransferase family. HemL subfamily. As to quaternary structure, homodimer. Pyridoxal 5'-phosphate serves as cofactor.

It localises to the cytoplasm. It carries out the reaction (S)-4-amino-5-oxopentanoate = 5-aminolevulinate. Its pathway is porphyrin-containing compound metabolism; protoporphyrin-IX biosynthesis; 5-aminolevulinate from L-glutamyl-tRNA(Glu): step 2/2. The protein operates within porphyrin-containing compound metabolism; chlorophyll biosynthesis. The sequence is that of Glutamate-1-semialdehyde 2,1-aminomutase from Prochlorococcus marinus (strain NATL2A).